Reading from the N-terminus, the 286-residue chain is Phosphoribosylaminoimidazole-succinocarboxamide synthase (286 aa).

This sequence belongs to the SAICAR synthetase family.

It carries out the reaction 5-amino-1-(5-phospho-D-ribosyl)imidazole-4-carboxylate + L-aspartate + ATP = (2S)-2-[5-amino-1-(5-phospho-beta-D-ribosyl)imidazole-4-carboxamido]succinate + ADP + phosphate + 2 H(+). It functions in the pathway purine metabolism; IMP biosynthesis via de novo pathway; 5-amino-1-(5-phospho-D-ribosyl)imidazole-4-carboxamide from 5-amino-1-(5-phospho-D-ribosyl)imidazole-4-carboxylate: step 1/2. The chain is Phosphoribosylaminoimidazole-succinocarboxamide synthase from Actinobacillus succinogenes (strain ATCC 55618 / DSM 22257 / CCUG 43843 / 130Z).